The following is a 379-amino-acid chain: MPASLTPSLDAFAEAKLAGLNAAGLRRRLVPTARTGGARAERGGRPVVSFSCNDYLGLATHPAVVAAARAALERYGAGSGGSRLVTGDHPVFAELEAELARRKGHEAALVFGSGYLANLGITPALAGAGDLILIDELGHSCMWAGTRLSGARTLPFRHNDLKHLEALLARERGEARHALILTERVFSMDGDRAPVADILDLARSFDAWTLVDDAHGLGVVGPDATAPLEMGTLSKALGSYGGYLCASRAVIDLLTSRARSFVYTTGLPPASAAAALAALRLIEAEPERAARPLALARRFTARLGLPEAQSAVVPVLVGEAEAALALSRALEARGFLVVAIRPPTVPAGTARLRIAFSAAHAEAEVDALAQALSELGAAG.

Substrate is bound by residues arginine 27 and arginine 34. 114–115 provides a ligand contact to pyridoxal 5'-phosphate; it reads GY. Histidine 139 provides a ligand contact to substrate. Residues serine 187, 212-215, and 232-235 each bind pyridoxal 5'-phosphate; these read DDAH and TLSK. The residue at position 235 (lysine 235) is an N6-(pyridoxal phosphate)lysine. Threonine 344 lines the substrate pocket.

Belongs to the class-II pyridoxal-phosphate-dependent aminotransferase family. BioF subfamily. As to quaternary structure, homodimer. It depends on pyridoxal 5'-phosphate as a cofactor.

It carries out the reaction 6-carboxyhexanoyl-[ACP] + L-alanine + H(+) = (8S)-8-amino-7-oxononanoate + holo-[ACP] + CO2. It functions in the pathway cofactor biosynthesis; biotin biosynthesis. In terms of biological role, catalyzes the decarboxylative condensation of pimeloyl-[acyl-carrier protein] and L-alanine to produce 8-amino-7-oxononanoate (AON), [acyl-carrier protein], and carbon dioxide. This is 8-amino-7-oxononanoate synthase from Methylobacterium nodulans (strain LMG 21967 / CNCM I-2342 / ORS 2060).